A 143-amino-acid chain; its full sequence is Nucleoside diphosphate kinase (143 aa).

ATP contacts are provided by Lys-11, Phe-59, Arg-87, Thr-93, Arg-104, and Asn-114. The active-site Pros-phosphohistidine intermediate is His-117.

Belongs to the NDK family. Homotetramer. It depends on Mg(2+) as a cofactor.

Its subcellular location is the cytoplasm. It catalyses the reaction a 2'-deoxyribonucleoside 5'-diphosphate + ATP = a 2'-deoxyribonucleoside 5'-triphosphate + ADP. The enzyme catalyses a ribonucleoside 5'-diphosphate + ATP = a ribonucleoside 5'-triphosphate + ADP. In terms of biological role, major role in the synthesis of nucleoside triphosphates other than ATP. The ATP gamma phosphate is transferred to the NDP beta phosphate via a ping-pong mechanism, using a phosphorylated active-site intermediate. The chain is Nucleoside diphosphate kinase from Klebsiella pneumoniae (strain 342).